The sequence spans 434 residues: Putative nuclease OPG089 (434 aa).

Positions 33, 74, 168, 170, 196, and 198 each coordinate Mg(2+).

Belongs to the XPG/RAD2 endonuclease family. FEN1 subfamily. Mg(2+) serves as cofactor.

The protein localises to the virion. Putative nuclease that seems to be required for double-strand break repair, homologous recombination, and production of full-length viral genomic DNA. This Vaccinia virus (strain Copenhagen) (VACV) protein is Putative nuclease OPG089 (OPG089).